Here is a 263-residue protein sequence, read N- to C-terminus: Triosephosphate isomerase (263 aa).

Position 10 to 12 (10 to 12) interacts with substrate; the sequence is NWK. The active-site Electrophile is His-104. Glu-176 acts as the Proton acceptor in catalysis. Substrate-binding positions include Gly-182, Ser-221, and 242–243; that span reads GG.

Belongs to the triosephosphate isomerase family. In terms of assembly, homodimer.

It localises to the cytoplasm. It catalyses the reaction D-glyceraldehyde 3-phosphate = dihydroxyacetone phosphate. Its pathway is carbohydrate biosynthesis; gluconeogenesis. The protein operates within carbohydrate degradation; glycolysis; D-glyceraldehyde 3-phosphate from glycerone phosphate: step 1/1. Its function is as follows. Involved in the gluconeogenesis. Catalyzes stereospecifically the conversion of dihydroxyacetone phosphate (DHAP) to D-glyceraldehyde-3-phosphate (G3P). This Haemophilus influenzae (strain 86-028NP) protein is Triosephosphate isomerase.